Here is a 591-residue protein sequence, read N- to C-terminus: Putative F-box protein At1g32140 (591 aa).

An F-box domain is found at 2-49 (TMMSDLSLDLVEEILCRVPITSLKAVRSSCKLWNVLSKNRILCKTEAR). Basic residues predominate over residues 567-581 (AGRKRKEKKTKRKSK). Residues 567–591 (AGRKRKEKKTKRKSKDKQMKLSNKV) form a disordered region.

The chain is Putative F-box protein At1g32140 from Arabidopsis thaliana (Mouse-ear cress).